We begin with the raw amino-acid sequence, 124 residues long: Ragulator complex protein LAMTOR2 homolog (124 aa).

It belongs to the GAMAD family. Part of the Ragulator complex.

Regulator of the TOR pathway, a signaling cascade that promotes cell growth in response to growth factors, energy levels, and amino acids. May activate the TOR signaling cascade in response to amino acids. The chain is Ragulator complex protein LAMTOR2 homolog from Caenorhabditis elegans.